A 120-amino-acid polypeptide reads, in one-letter code: Large ribosomal subunit protein bL17 (120 aa).

This sequence belongs to the bacterial ribosomal protein bL17 family. In terms of assembly, part of the 50S ribosomal subunit. Contacts protein L32.

In Shouchella clausii (strain KSM-K16) (Alkalihalobacillus clausii), this protein is Large ribosomal subunit protein bL17.